The following is a 183-amino-acid chain: Adenylate kinase (183 aa).

Gly-12 to Thr-17 serves as a coordination point for ATP. The NMP stretch occupies residues Ser-32–Val-61. Residues Thr-33, Arg-38, Glu-59–Val-61, Gly-86–Arg-89, and Gln-93 each bind AMP. Positions Ala-127–Asp-133 are LID. Arg-128 is a binding site for ATP. Residues Arg-130 and Arg-141 each coordinate AMP. Position 169 (Gly-169) interacts with ATP.

The protein belongs to the adenylate kinase family. In terms of assembly, monomer.

It localises to the cytoplasm. The enzyme catalyses AMP + ATP = 2 ADP. The protein operates within purine metabolism; AMP biosynthesis via salvage pathway; AMP from ADP: step 1/1. Catalyzes the reversible transfer of the terminal phosphate group between ATP and AMP. Plays an important role in cellular energy homeostasis and in adenine nucleotide metabolism. This chain is Adenylate kinase, found in Parasynechococcus marenigrum (strain WH8102).